The chain runs to 144 residues: Transcriptional regulator SlyA (144 aa).

Positions 2-135 (ESPLGSDLAR…LIKLIAKLEH (134 aa)) constitute an HTH marR-type domain. The H-T-H motif DNA-binding region spans 49 to 72 (QIQLAKAIGIEQPSLVRTLDQLEE).

It belongs to the SlyA family. In terms of assembly, homodimer.

Its function is as follows. Transcription regulator that can specifically activate or repress expression of target genes. This is Transcriptional regulator SlyA from Escherichia coli O127:H6 (strain E2348/69 / EPEC).